Here is a 276-residue protein sequence, read N- to C-terminus: Undecaprenyl-diphosphatase (276 aa).

5 consecutive transmembrane segments (helical) span residues 84 to 104 (YRLGWYVIIGTIPICILGLFF), 115 to 135 (LWVVVTALVVFSGVIALAEYV), 188 to 208 (FGFLLAIPAVFASGLFSLPDA), 222 to 242 (QLLVATLIAFVLGLTAVAWLL), and 250 to 270 (MYWFVGYRVLVGTGMLVLLAT).

It belongs to the UppP family.

The protein localises to the cell membrane. It carries out the reaction di-trans,octa-cis-undecaprenyl diphosphate + H2O = di-trans,octa-cis-undecaprenyl phosphate + phosphate + H(+). Catalyzes the dephosphorylation of undecaprenyl diphosphate (UPP). Confers resistance to bacitracin. The chain is Undecaprenyl-diphosphatase from Mycobacterium bovis (strain ATCC BAA-935 / AF2122/97).